The sequence spans 247 residues: 3-deoxy-manno-octulosonate cytidylyltransferase (247 aa).

Belongs to the KdsB family.

It localises to the cytoplasm. It catalyses the reaction 3-deoxy-alpha-D-manno-oct-2-ulosonate + CTP = CMP-3-deoxy-beta-D-manno-octulosonate + diphosphate. It functions in the pathway nucleotide-sugar biosynthesis; CMP-3-deoxy-D-manno-octulosonate biosynthesis; CMP-3-deoxy-D-manno-octulosonate from 3-deoxy-D-manno-octulosonate and CTP: step 1/1. The protein operates within bacterial outer membrane biogenesis; lipopolysaccharide biosynthesis. Activates KDO (a required 8-carbon sugar) for incorporation into bacterial lipopolysaccharide in Gram-negative bacteria. The chain is 3-deoxy-manno-octulosonate cytidylyltransferase from Methylorubrum extorquens (strain CM4 / NCIMB 13688) (Methylobacterium extorquens).